The sequence spans 268 residues: Glutamate racemase (268 aa).

Residues 10–11 (DS) and 42–43 (YG) contribute to the substrate site. C73 serves as the catalytic Proton donor/acceptor. 74–75 (NT) provides a ligand contact to substrate. C184 acts as the Proton donor/acceptor in catalysis. 185 to 186 (TH) is a substrate binding site.

The protein belongs to the aspartate/glutamate racemases family.

It carries out the reaction L-glutamate = D-glutamate. Its pathway is cell wall biogenesis; peptidoglycan biosynthesis. Its function is as follows. Provides the (R)-glutamate required for cell wall biosynthesis. The protein is Glutamate racemase of Carnobacterium sp. (strain St2).